The following is a 313-amino-acid chain: MIFATLEHILTHISFSIISIVITTHLMTFAREIAGLSDLSEKGMIAVFLRITGLLVTRWIYSGHLPLSNLYESLIFLSWGFSLIHMISKIQNHKNFLSSITAPSAILTQGFVTSGLLTEMHQSAILVPALQSHWLIMHVSMMLLSYAALLCGSLLSIALLVITFRKKLDIIFLLIRLFSFGEIQYLNEKRSILQNTSFSFRNYHKYQLTQQLDHWSYRVIGIGFTLLTLGILSGAVWANEAWGSYWNWDPKETWAFITWTISAIYLHTRTNKNLQSANSAIVASIGFLIIWICYFGVNLLGIGLHSYGSFALR.

The next 8 helical transmembrane spans lie at 13 to 35 (ISFS…EIAG), 43 to 63 (GMIA…IYSG), 67 to 87 (LSNL…IHMI), 96 to 116 (FLSS…TSGL), 142 to 162 (MLLS…LLVI), 219 to 239 (VIGI…VWAN), 252 to 269 (ETWA…LHTR), and 280 to 300 (AIVA…VNLL).

Belongs to the CcmF/CycK/Ccl1/NrfE/CcsA family. May interact with Ccs1.

Its subcellular location is the plastid. It localises to the chloroplast thylakoid membrane. Required during biogenesis of c-type cytochromes (cytochrome c6 and cytochrome f) at the step of heme attachment. This chain is Cytochrome c biogenesis protein CcsA, found in Amborella trichopoda.